Consider the following 96-residue polypeptide: Salivary protein FS50 (96 aa).

The signal sequence occupies residues M1 to S19. 4 disulfides stabilise this stretch: C26–C71, C50–C78, C63–C91, and C67–C93.

The protein localises to the secreted. In terms of biological role, salivary protein that inhibits host voltage-gated sodium channel Nav1.5/SCN5A. The polypeptide is Salivary protein FS50 (Xenopsylla cheopis (Oriental rat flea)).